Consider the following 267-residue polypeptide: MTKFVGCIDLHDGQVKQIVGGTLTDSSKDKVTTNFVSKLPPSHYAKLYHENQVEGCHVIKLGPNNDEAALEALNECPNFLQVGGGITLDNCGYWLKYASKIIVTSFLFDKSTYQFQREKLVKLAEICGKDRLVVDLSCKRVTKPDQEPKWVVAMNKWQTLTDLELNERTFADLCQYTDEFLVHAADVEGLCNGIDEELVAHLYKWTADIPKVKIVYAGGAKSVDDLRLVEKLSHGKIDLTFGSALDIFGGSLVKFEDCVQWNHEKHA.

The protein belongs to the HisA/HisF family.

The protein localises to the cytoplasm. It carries out the reaction 1-(5-phospho-beta-D-ribosyl)-5-[(5-phospho-beta-D-ribosylamino)methylideneamino]imidazole-4-carboxamide = 5-[(5-phospho-1-deoxy-D-ribulos-1-ylimino)methylamino]-1-(5-phospho-beta-D-ribosyl)imidazole-4-carboxamide. Its pathway is amino-acid biosynthesis; L-histidine biosynthesis; L-histidine from 5-phospho-alpha-D-ribose 1-diphosphate: step 4/9. This is 1-(5-phosphoribosyl)-5-[(5-phosphoribosylamino)methylideneamino] imidazole-4-carboxamide isomerase (HIS6) from Kluyveromyces lactis (strain ATCC 8585 / CBS 2359 / DSM 70799 / NBRC 1267 / NRRL Y-1140 / WM37) (Yeast).